The primary structure comprises 445 residues: tRNA-2-methylthio-N(6)-dimethylallyladenosine synthase (445 aa).

The region spanning 3-124 (KKLYIKTYGC…LPELISKVVR (122 aa)) is the MTTase N-terminal domain. [4Fe-4S] cluster is bound by residues Cys-12, Cys-48, Cys-87, Cys-162, Cys-166, and Cys-169. The Radical SAM core domain maps to 148–380 (YTQGASSFIS…QKELATQQLA (233 aa)). Positions 383 to 445 (ESCVGSTMKV…ALNSLTGEIL (63 aa)) constitute a TRAM domain.

Belongs to the methylthiotransferase family. MiaB subfamily. In terms of assembly, monomer. [4Fe-4S] cluster serves as cofactor.

It localises to the cytoplasm. The enzyme catalyses N(6)-dimethylallyladenosine(37) in tRNA + (sulfur carrier)-SH + AH2 + 2 S-adenosyl-L-methionine = 2-methylsulfanyl-N(6)-dimethylallyladenosine(37) in tRNA + (sulfur carrier)-H + 5'-deoxyadenosine + L-methionine + A + S-adenosyl-L-homocysteine + 2 H(+). Catalyzes the methylthiolation of N6-(dimethylallyl)adenosine (i(6)A), leading to the formation of 2-methylthio-N6-(dimethylallyl)adenosine (ms(2)i(6)A) at position 37 in tRNAs that read codons beginning with uridine. This is tRNA-2-methylthio-N(6)-dimethylallyladenosine synthase from Rickettsia typhi (strain ATCC VR-144 / Wilmington).